The sequence spans 224 residues: UPF0758 protein Noc_0236 (224 aa).

The 123-residue stretch at 102-224 (VLTDPQTTQR…TLSFAERGLL (123 aa)) folds into the MPN domain. Zn(2+)-binding residues include histidine 173, histidine 175, and aspartate 186. A JAMM motif motif is present at residues 173–186 (HNHPSGVAEPSRAD).

This sequence belongs to the UPF0758 family.

This chain is UPF0758 protein Noc_0236, found in Nitrosococcus oceani (strain ATCC 19707 / BCRC 17464 / JCM 30415 / NCIMB 11848 / C-107).